A 321-amino-acid polypeptide reads, in one-letter code: Beta-ketoacyl-[acyl-carrier-protein] synthase III (321 aa).

Active-site residues include cysteine 113 and histidine 246. The ACP-binding stretch occupies residues 247 to 251; that stretch reads QANVR. Residue asparagine 276 is part of the active site.

This sequence belongs to the thiolase-like superfamily. FabH family. As to quaternary structure, homodimer.

The protein localises to the cytoplasm. The enzyme catalyses malonyl-[ACP] + acetyl-CoA + H(+) = 3-oxobutanoyl-[ACP] + CO2 + CoA. It participates in lipid metabolism; fatty acid biosynthesis. Functionally, catalyzes the condensation reaction of fatty acid synthesis by the addition to an acyl acceptor of two carbons from malonyl-ACP. Catalyzes the first condensation reaction which initiates fatty acid synthesis and may therefore play a role in governing the total rate of fatty acid production. Possesses both acetoacetyl-ACP synthase and acetyl transacylase activities. Its substrate specificity determines the biosynthesis of branched-chain and/or straight-chain of fatty acids. This Enterococcus faecalis (strain ATCC 700802 / V583) protein is Beta-ketoacyl-[acyl-carrier-protein] synthase III.